Consider the following 382-residue polypeptide: Dual-specificity RNA methyltransferase RlmN (382 aa).

The active-site Proton acceptor is the E95. Positions E101–D349 constitute a Radical SAM core domain. A disulfide bond links C108 and C354. Residues C115, C119, and C122 each contribute to the [4Fe-4S] cluster site. Residues G180 to E181, S212, S234 to H236, and N311 each bind S-adenosyl-L-methionine. C354 acts as the S-methylcysteine intermediate in catalysis.

This sequence belongs to the radical SAM superfamily. RlmN family. [4Fe-4S] cluster serves as cofactor.

It localises to the cytoplasm. It carries out the reaction adenosine(2503) in 23S rRNA + 2 reduced [2Fe-2S]-[ferredoxin] + 2 S-adenosyl-L-methionine = 2-methyladenosine(2503) in 23S rRNA + 5'-deoxyadenosine + L-methionine + 2 oxidized [2Fe-2S]-[ferredoxin] + S-adenosyl-L-homocysteine. It catalyses the reaction adenosine(37) in tRNA + 2 reduced [2Fe-2S]-[ferredoxin] + 2 S-adenosyl-L-methionine = 2-methyladenosine(37) in tRNA + 5'-deoxyadenosine + L-methionine + 2 oxidized [2Fe-2S]-[ferredoxin] + S-adenosyl-L-homocysteine. Its function is as follows. Specifically methylates position 2 of adenine 2503 in 23S rRNA and position 2 of adenine 37 in tRNAs. m2A2503 modification seems to play a crucial role in the proofreading step occurring at the peptidyl transferase center and thus would serve to optimize ribosomal fidelity. This is Dual-specificity RNA methyltransferase RlmN from Paraburkholderia phymatum (strain DSM 17167 / CIP 108236 / LMG 21445 / STM815) (Burkholderia phymatum).